Reading from the N-terminus, the 319-residue chain is Acetyl-coenzyme A carboxylase carboxyl transferase subunit alpha (319 aa).

A CoA carboxyltransferase C-terminal domain is found at 39-293; sequence RLQKKSNDLT…KAVLEKQLHE (255 aa).

This sequence belongs to the AccA family. Acetyl-CoA carboxylase is a heterohexamer composed of biotin carboxyl carrier protein (AccB), biotin carboxylase (AccC) and two subunits each of ACCase subunit alpha (AccA) and ACCase subunit beta (AccD).

It is found in the cytoplasm. The catalysed reaction is N(6)-carboxybiotinyl-L-lysyl-[protein] + acetyl-CoA = N(6)-biotinyl-L-lysyl-[protein] + malonyl-CoA. Its pathway is lipid metabolism; malonyl-CoA biosynthesis; malonyl-CoA from acetyl-CoA: step 1/1. In terms of biological role, component of the acetyl coenzyme A carboxylase (ACC) complex. First, biotin carboxylase catalyzes the carboxylation of biotin on its carrier protein (BCCP) and then the CO(2) group is transferred by the carboxyltransferase to acetyl-CoA to form malonyl-CoA. The chain is Acetyl-coenzyme A carboxylase carboxyl transferase subunit alpha from Neisseria meningitidis serogroup C (strain 053442).